The primary structure comprises 412 residues: Argininosuccinate synthase (412 aa).

Residues 24–32 and alanine 50 contribute to the ATP site; that span reads AFSGGLDTS. Residues tyrosine 103 and serine 108 each coordinate L-citrulline. Residue glycine 132 participates in ATP binding. L-aspartate is bound by residues threonine 134, asparagine 138, and aspartate 139. Asparagine 138 lines the L-citrulline pocket. Arginine 142 lines the L-citrulline pocket.

Belongs to the argininosuccinate synthase family. Type 1 subfamily. In terms of assembly, homotetramer.

Its subcellular location is the cytoplasm. The catalysed reaction is L-citrulline + L-aspartate + ATP = 2-(N(omega)-L-arginino)succinate + AMP + diphosphate + H(+). It functions in the pathway amino-acid biosynthesis; L-arginine biosynthesis; L-arginine from L-ornithine and carbamoyl phosphate: step 2/3. The protein is Argininosuccinate synthase of Xanthomonas axonopodis pv. citri (strain 306).